The sequence spans 470 residues: Cholesterol 7-desaturase nvd 1 (470 aa).

The chain crosses the membrane as a helical span at residues 67–87 (LALCIAGFSVLMYFLYVLVFV). The Rieske domain occupies 136-238 (FRLVDSQQLE…CREVNKAIFV (103 aa)). 4 residues coordinate [2Fe-2S] cluster: Cys176, His178, Cys196, and His199.

It belongs to the cholesterol 7-desaturase family. Requires [2Fe-2S] cluster as cofactor.

The protein localises to the membrane. The enzyme catalyses cholesterol + NADPH + O2 + H(+) = 7-dehydrocholesterol + NADP(+) + 2 H2O. It carries out the reaction cholesterol + NADH + O2 + H(+) = 7-dehydrocholesterol + NAD(+) + 2 H2O. Its pathway is steroid hormone biosynthesis; dafachronic acid biosynthesis. Its function is as follows. Catalyzes the production of 7-dehydrocholesterol (7-DHC or cholesta-5,7-dien-3beta-ol) by inserting a double bond (desaturating) at the C7-C8 single bond of cholesterol. Essential regulator of steroid biosynthesis as this reaction is the first step in the synthesis of the steroid hormone Delta(7)-dafachronic acid. This chain is Cholesterol 7-desaturase nvd 1, found in Ciona intestinalis (Transparent sea squirt).